A 528-amino-acid polypeptide reads, in one-letter code: Ivanolysin (528 aa).

The signal sequence occupies residues 1-23 (MKKIMLLLMTLLLVSLPLAQEAQ). Transmembrane regions (beta stranded) follow at residues 213 to 226 (ESQLVAKFGAAFKA), 233 to 242 (VNFGAISEGK), 311 to 320 (STRVKAAFDT), and 328 to 340 (KGDTELENIIQNA). Residues 482 to 492 (ECTGLAWEWWR) carry the Conserved undecapeptide motif. Residues 514–515 (TL) carry the Cholesterol binding motif.

The protein belongs to the cholesterol-dependent cytolysin family. Homooligomeric pore complex of 35 to 50 subunits; when inserted in the host membrane.

It is found in the secreted. It localises to the host membrane. A cholesterol-dependent toxin that causes cytolysis by forming pores in cholesterol containing host membranes. After binding to target membranes, the protein undergoes a major conformation change, leading to its insertion in the host membrane and formation of an oligomeric pore complex. Cholesterol is required for binding to host membranes, membrane insertion and pore formation; cholesterol binding is mediated by a Thr-Leu pair in the C-terminus. Can be reversibly inactivated by oxidation. The chain is Ivanolysin (ilo) from Listeria ivanovii.